The primary structure comprises 420 residues: Diaminopimelate decarboxylase (420 aa).

The residue at position 54 (K54) is an N6-(pyridoxal phosphate)lysine. Position 191 (H191) interacts with substrate. Residues G227 and E268–R271 each bind pyridoxal 5'-phosphate. The substrate site is built by R271, R307, and Y311. C342 acts as the Proton donor in catalysis. Substrate contacts are provided by E343 and Y378. Y378 serves as a coordination point for pyridoxal 5'-phosphate.

This sequence belongs to the Orn/Lys/Arg decarboxylase class-II family. LysA subfamily. Pyridoxal 5'-phosphate serves as cofactor.

The enzyme catalyses meso-2,6-diaminopimelate + H(+) = L-lysine + CO2. It participates in amino-acid biosynthesis; L-lysine biosynthesis via DAP pathway; L-lysine from DL-2,6-diaminopimelate: step 1/1. Is activated by 2,3-dimercaptopropan-1-ol. In terms of biological role, specifically catalyzes the decarboxylation of meso-diaminopimelate (meso-DAP) to L-lysine. Is not active against the DD- or LL-isomers of diaminopimelate. This is Diaminopimelate decarboxylase from Escherichia coli (strain K12).